The primary structure comprises 415 residues: Histidine--tRNA ligase (415 aa).

Belongs to the class-II aminoacyl-tRNA synthetase family. In terms of assembly, homodimer.

It is found in the cytoplasm. The enzyme catalyses tRNA(His) + L-histidine + ATP = L-histidyl-tRNA(His) + AMP + diphosphate + H(+). This Clostridium botulinum (strain Loch Maree / Type A3) protein is Histidine--tRNA ligase.